Consider the following 126-residue polypeptide: Large ribosomal subunit protein bL12 (126 aa).

This sequence belongs to the bacterial ribosomal protein bL12 family. As to quaternary structure, homodimer. Part of the ribosomal stalk of the 50S ribosomal subunit. Forms a multimeric L10(L12)X complex, where L10 forms an elongated spine to which 2 to 4 L12 dimers bind in a sequential fashion. Binds GTP-bound translation factors.

Forms part of the ribosomal stalk which helps the ribosome interact with GTP-bound translation factors. Is thus essential for accurate translation. The sequence is that of Large ribosomal subunit protein bL12 from Geobacter sp. (strain M21).